Consider the following 413-residue polypeptide: Multifunctional CCA protein (413 aa).

Positions 8 and 11 each coordinate ATP. Residues G8 and R11 each coordinate CTP. Positions 21 and 23 each coordinate Mg(2+). Positions 91, 137, and 140 each coordinate ATP. 3 residues coordinate CTP: R91, R137, and R140. One can recognise an HD domain in the interval 228 to 329 (TGVHTLMTLS…VKLFDAIDAW (102 aa)).

Belongs to the tRNA nucleotidyltransferase/poly(A) polymerase family. Bacterial CCA-adding enzyme type 1 subfamily. Monomer. Can also form homodimers and oligomers. Mg(2+) is required as a cofactor. The cofactor is Ni(2+).

The enzyme catalyses a tRNA precursor + 2 CTP + ATP = a tRNA with a 3' CCA end + 3 diphosphate. It catalyses the reaction a tRNA with a 3' CCA end + 2 CTP + ATP = a tRNA with a 3' CCACCA end + 3 diphosphate. Its function is as follows. Catalyzes the addition and repair of the essential 3'-terminal CCA sequence in tRNAs without using a nucleic acid template. Adds these three nucleotides in the order of C, C, and A to the tRNA nucleotide-73, using CTP and ATP as substrates and producing inorganic pyrophosphate. tRNA 3'-terminal CCA addition is required both for tRNA processing and repair. Also involved in tRNA surveillance by mediating tandem CCA addition to generate a CCACCA at the 3' terminus of unstable tRNAs. While stable tRNAs receive only 3'-terminal CCA, unstable tRNAs are marked with CCACCA and rapidly degraded. The sequence is that of Multifunctional CCA protein from Salmonella paratyphi A (strain ATCC 9150 / SARB42).